The sequence spans 345 residues: MIKLNNIXKIFELPXKKLTALDNVSLNIEKGQICGVIGASGAGKSTLIRCVNLLEKPTSGSVIVDGVELTKLSDRELVLARRQIGMIFQHFNLLSSRTVFENVALPLELESESKAKIQEKITALLDLVGLSEKRDAYPSNLSGGQKQRVAIARALASDPKVLLCDEATSALDPATTQSILKLLKEINRTLGITILLITHEMEVVKQICDQVAVIDQGRLVEQGTVGEIFANPKTELAQEFIRSTFHISLPDEYLENLTDTPKHSKAYPIIKFEFTGRSVDAPLLSQASKKFGVELSILTSQIDYAGGVKFGYTIAEVEGDEDAITQTKVYLMENNVRVEVLGYVQ.

The ABC transporter domain maps to 2 to 241 (IKLNNIXKIF…PKTELAQEFI (240 aa)). 38–45 (GASGAGKS) serves as a coordination point for ATP.

It belongs to the ABC transporter superfamily. Methionine importer (TC 3.A.1.24) family. As to quaternary structure, the complex is composed of two ATP-binding proteins (MetN), two transmembrane proteins (MetI) and a solute-binding protein (MetQ).

It localises to the cell inner membrane. It carries out the reaction L-methionine(out) + ATP + H2O = L-methionine(in) + ADP + phosphate + H(+). The catalysed reaction is D-methionine(out) + ATP + H2O = D-methionine(in) + ADP + phosphate + H(+). In terms of biological role, part of the ABC transporter complex MetNIQ involved in methionine import. Responsible for energy coupling to the transport system. This Haemophilus influenzae (strain ATCC 51907 / DSM 11121 / KW20 / Rd) protein is Methionine import ATP-binding protein MetN.